Here is a 288-residue protein sequence, read N- to C-terminus: 4-hydroxy-tetrahydrodipicolinate synthase (288 aa).

T47 lines the pyruvate pocket. Y136 functions as the Proton donor/acceptor in the catalytic mechanism. K164 serves as the catalytic Schiff-base intermediate with substrate. A pyruvate-binding site is contributed by I204.

The protein belongs to the DapA family. Homotetramer; dimer of dimers.

Its subcellular location is the cytoplasm. The enzyme catalyses L-aspartate 4-semialdehyde + pyruvate = (2S,4S)-4-hydroxy-2,3,4,5-tetrahydrodipicolinate + H2O + H(+). The protein operates within amino-acid biosynthesis; L-lysine biosynthesis via DAP pathway; (S)-tetrahydrodipicolinate from L-aspartate: step 3/4. Functionally, catalyzes the condensation of (S)-aspartate-beta-semialdehyde [(S)-ASA] and pyruvate to 4-hydroxy-tetrahydrodipicolinate (HTPA). The chain is 4-hydroxy-tetrahydrodipicolinate synthase from Leuconostoc mesenteroides subsp. mesenteroides (strain ATCC 8293 / DSM 20343 / BCRC 11652 / CCM 1803 / JCM 6124 / NCDO 523 / NBRC 100496 / NCIMB 8023 / NCTC 12954 / NRRL B-1118 / 37Y).